Reading from the N-terminus, the 430-residue chain is UDP-N-acetylglucosamine 1-carboxyvinyltransferase (430 aa).

Phosphoenolpyruvate is bound at residue 22–23 (KN). Residue Arg102 participates in UDP-N-acetyl-alpha-D-glucosamine binding. The active-site Proton donor is Cys126. Residue Cys126 is modified to 2-(S-cysteinyl)pyruvic acid O-phosphothioketal. UDP-N-acetyl-alpha-D-glucosamine contacts are provided by residues 131–135 (RPVDL), 172–175 (KVSV), Asp317, and Ile339.

This sequence belongs to the EPSP synthase family. MurA subfamily.

It localises to the cytoplasm. The enzyme catalyses phosphoenolpyruvate + UDP-N-acetyl-alpha-D-glucosamine = UDP-N-acetyl-3-O-(1-carboxyvinyl)-alpha-D-glucosamine + phosphate. It participates in cell wall biogenesis; peptidoglycan biosynthesis. Its function is as follows. Cell wall formation. Adds enolpyruvyl to UDP-N-acetylglucosamine. The protein is UDP-N-acetylglucosamine 1-carboxyvinyltransferase of Rhizobium etli (strain ATCC 51251 / DSM 11541 / JCM 21823 / NBRC 15573 / CFN 42).